Consider the following 143-residue polypeptide: Ribosome-binding factor A (143 aa).

Residues 116–128 are compositionally biased toward basic and acidic residues; the sequence is SDDEAKQKQHGDQ. The tract at residues 116–143 is disordered; sequence SDDEAKQKQHGDQQDVSQSSDDKSEGED.

This sequence belongs to the RbfA family. As to quaternary structure, monomer. Binds 30S ribosomal subunits, but not 50S ribosomal subunits or 70S ribosomes.

It localises to the cytoplasm. One of several proteins that assist in the late maturation steps of the functional core of the 30S ribosomal subunit. Associates with free 30S ribosomal subunits (but not with 30S subunits that are part of 70S ribosomes or polysomes). Required for efficient processing of 16S rRNA. May interact with the 5'-terminal helix region of 16S rRNA. The sequence is that of Ribosome-binding factor A from Shewanella sediminis (strain HAW-EB3).